Reading from the N-terminus, the 178-residue chain is Putative pre-16S rRNA nuclease (178 aa).

The span at 1–18 shows a compositional bias: basic and acidic residues; that stretch reads MDHAEQGPDRPGVDDPGR. The interval 1 to 21 is disordered; the sequence is MDHAEQGPDRPGVDDPGRGRR.

Belongs to the YqgF nuclease family.

It localises to the cytoplasm. In terms of biological role, could be a nuclease involved in processing of the 5'-end of pre-16S rRNA. In Rhodococcus jostii (strain RHA1), this protein is Putative pre-16S rRNA nuclease.